The following is a 266-amino-acid chain: Vitamin B12-binding protein (266 aa).

The first 22 residues, 1–22 (MVKQMFRALVALLLTLPVWLYA), serve as a signal peptide directing secretion. Residues 25-266 (RVITLSPANT…QLCNALSQVN (242 aa)) enclose the Fe/B12 periplasmic-binding domain. Residues tyrosine 50 and 242 to 246 (DWFER) each bind cyanocob(III)alamin. Cysteine 183 and cysteine 259 are joined by a disulfide.

This sequence belongs to the BtuF family. As to quaternary structure, the complex is composed of two ATP-binding proteins (BtuD), two transmembrane proteins (BtuC) and a solute-binding protein (BtuF).

Its subcellular location is the periplasm. Functionally, part of the ABC transporter complex BtuCDF involved in vitamin B12 import. Binds vitamin B12 and delivers it to the periplasmic surface of BtuC. This Salmonella choleraesuis (strain SC-B67) protein is Vitamin B12-binding protein.